The primary structure comprises 115 residues: NADH-ubiquinone oxidoreductase chain 3 (115 aa).

3 consecutive transmembrane segments (helical) span residues 3-23, 55-75, and 84-104; these read FVLA…LTFW, FFLV…LLPL, and LPLM…GLTY.

It belongs to the complex I subunit 3 family. As to quaternary structure, core subunit of respiratory chain NADH dehydrogenase (Complex I) which is composed of 45 different subunits. Interacts with TMEM186. Interacts with TMEM242.

The protein resides in the mitochondrion inner membrane. The catalysed reaction is a ubiquinone + NADH + 5 H(+)(in) = a ubiquinol + NAD(+) + 4 H(+)(out). Its function is as follows. Core subunit of the mitochondrial membrane respiratory chain NADH dehydrogenase (Complex I) which catalyzes electron transfer from NADH through the respiratory chain, using ubiquinone as an electron acceptor. Essential for the catalytic activity of complex I. This Pongo pygmaeus (Bornean orangutan) protein is NADH-ubiquinone oxidoreductase chain 3.